Consider the following 513-residue polypeptide: Zinc finger protein RFP (513 aa).

An RING-type zinc finger spans residues 16 to 57 (CPVCLQYFAEPMMLDCGHNICCACLARCWGTAETNVSCPQCR). 4 residues coordinate Zn(2+): Cys96, His99, Cys118, and His124. The B box-type zinc finger occupies 96–127 (CEKHREPLKLYCEEDQMPICVVCDRSREHRGH). Coiled-coil stretches lie at residues 132–172 (LEEA…AELL) and 282–311 (QKCL…LREA). Positions 298–492 (MQSDMEKIQE…SAAPLIICPM (195 aa)) constitute a B30.2/SPRY domain.

This sequence belongs to the TRIM/RBCC family. As to quaternary structure, homomultimerizes. Part of a complex consisting of TRIM27, USP7 and MAGEL2; directly interacts with USP7. Interacts with PML, EIF3S6, EPC1, CHD4 and EID1. Interacts with MAGED4, MAGEF1 and MAGEL2. Interacts with PTPN11. Interacts with autophagy receptor p62/SQSTM1. In terms of assembly, (Microbial infection) Interacts with M.tuberculosis PtpA, whick blocks TRIM27-promoted JNK/p38 MAPK pathway activation and cell apoptosis. (Microbial infection) Interacts with herpes simplex virus protein ICP0. As to expression, expressed in testis namely within the seminiferous tubules.

Its subcellular location is the nucleus. The protein resides in the cytoplasm. It localises to the PML body. It is found in the early endosome. The protein localises to the mitochondrion. The catalysed reaction is S-ubiquitinyl-[E2 ubiquitin-conjugating enzyme]-L-cysteine + [acceptor protein]-L-lysine = [E2 ubiquitin-conjugating enzyme]-L-cysteine + N(6)-ubiquitinyl-[acceptor protein]-L-lysine.. Its pathway is protein modification; protein ubiquitination. Its function is as follows. E3 ubiquitin-protein ligase that mediates ubiquitination of various substrates and thereby plays a role in diffent processes including proliferation, innate immunity, apoptosis, immune response or autophagy. Ubiquitinates PIK3C2B and inhibits its activity by mediating the formation of 'Lys-48'-linked polyubiquitin chains; the function inhibits CD4 T-cell activation. Acts as a regulator of retrograde transport: together with MAGEL2, mediates the formation of 'Lys-63'-linked polyubiquitin chains at 'Lys-220' of WASHC1, leading to promote endosomal F-actin assembly. Has a transcriptional repressor activity by cooperating with EPC1. Induces apoptosis by activating Jun N-terminal kinase and p38 kinase and also increases caspase-3-like activity independently of mitochondrial events. May function in male germ cell development. Has DNA-binding activity and preferentially bound to double-stranded DNA. Forms a complex with and ubiquitinates the ubiquitin-specific protease USP7, which in turn deubiquitinates RIPK1 resulting in the positive regulation of TNF-alpha-induced apoptosis. In addition, acts with USP7 or PTPN11 as an inhibitor of the antiviral signaling pathway by promoting kinase TBK1 ubiquitination and degradation. Acts as a negative regulator of NOD2 signaling by mediating ubiquitination of NOD2, promoting its degradation by the proteasome. Alternatively, facilitates mitophagy via stabilization of active TBK1. Negatively regulates autophagy flux under basal conditions by directly polyubiquitinating ULK1. During starvation-induced autophagy, catalyzes non-degradative ubiquitination of the kinase STK38L promoting its activation and phosphorylation of ULK1 leading to its ubiquitination and degradation to restrain the amplitude and duration of autophagy. Functionally, (Microbial infection) Positively regulates hepatitis C virus replication by suppressing type I IFN response during infection. In Homo sapiens (Human), this protein is Zinc finger protein RFP.